The following is a 289-amino-acid chain: 4-hydroxy-3-methylbut-2-enyl diphosphate reductase (289 aa).

Cys-13 is a binding site for [4Fe-4S] cluster. (2E)-4-hydroxy-3-methylbut-2-enyl diphosphate-binding residues include His-42 and His-76. Residues His-42 and His-76 each coordinate dimethylallyl diphosphate. Residues His-42 and His-76 each coordinate isopentenyl diphosphate. Position 98 (Cys-98) interacts with [4Fe-4S] cluster. His-130 contributes to the (2E)-4-hydroxy-3-methylbut-2-enyl diphosphate binding site. His-130 lines the dimethylallyl diphosphate pocket. Residue His-130 participates in isopentenyl diphosphate binding. The active-site Proton donor is the Glu-132. Residue Thr-168 participates in (2E)-4-hydroxy-3-methylbut-2-enyl diphosphate binding. Cys-199 contacts [4Fe-4S] cluster. The (2E)-4-hydroxy-3-methylbut-2-enyl diphosphate site is built by Ser-227, Ser-228, Asn-229, and Ser-272. The dimethylallyl diphosphate site is built by Ser-227, Ser-228, Asn-229, and Ser-272. Ser-227, Ser-228, Asn-229, and Ser-272 together coordinate isopentenyl diphosphate.

Belongs to the IspH family. Requires [4Fe-4S] cluster as cofactor.

It carries out the reaction isopentenyl diphosphate + 2 oxidized [2Fe-2S]-[ferredoxin] + H2O = (2E)-4-hydroxy-3-methylbut-2-enyl diphosphate + 2 reduced [2Fe-2S]-[ferredoxin] + 2 H(+). The enzyme catalyses dimethylallyl diphosphate + 2 oxidized [2Fe-2S]-[ferredoxin] + H2O = (2E)-4-hydroxy-3-methylbut-2-enyl diphosphate + 2 reduced [2Fe-2S]-[ferredoxin] + 2 H(+). Its pathway is isoprenoid biosynthesis; dimethylallyl diphosphate biosynthesis; dimethylallyl diphosphate from (2E)-4-hydroxy-3-methylbutenyl diphosphate: step 1/1. It functions in the pathway isoprenoid biosynthesis; isopentenyl diphosphate biosynthesis via DXP pathway; isopentenyl diphosphate from 1-deoxy-D-xylulose 5-phosphate: step 6/6. In terms of biological role, catalyzes the conversion of 1-hydroxy-2-methyl-2-(E)-butenyl 4-diphosphate (HMBPP) into a mixture of isopentenyl diphosphate (IPP) and dimethylallyl diphosphate (DMAPP). Acts in the terminal step of the DOXP/MEP pathway for isoprenoid precursor biosynthesis. The sequence is that of 4-hydroxy-3-methylbut-2-enyl diphosphate reductase from Porphyromonas gingivalis (strain ATCC BAA-308 / W83).